The primary structure comprises 694 residues: Heat shock protein HSP 90-alpha (694 aa).

Phosphothreonine; by PRKDC is present on residues T5 and T7. The tract at residues 9–236 is interaction with NR3C1; that stretch reads DQPMEEEEVE…DKEVSDDEAK (228 aa). N51 is an ATP binding site. K58 and K84 each carry N6-acetyllysine. The ATP site is built by D93, K112, and F138. Positions 228–241 are enriched in basic and acidic residues; the sequence is KEVSDDEAKQPDDK. The disordered stretch occupies residues 228 to 275; that stretch reads KEVSDDEAKQPDDKPEIEDVGSDEEEEEKKDGDIDQEELNKTKPIWTR. S231 and S249 each carry phosphoserine. A compositionally biased stretch (acidic residues) spans 242–255; the sequence is PEIEDVGSDEEEEE. Residues 256-268 are compositionally biased toward basic and acidic residues; sequence KKDGDIDQEELNK. An interaction with NR3C1 region spans residues 258 to 578; it reads DGDIDQEELN…TANMERIMKA (321 aa). The interval 261-582 is interaction with FNIP2 and TSC1; that stretch reads IDQEELNKTK…ERIMKAQALR (322 aa). The interaction with FLCN and FNIP1 stretch occupies residues 261–694; that stretch reads IDQEELNKTK…DDTSRMEEVD (434 aa). Residue Y289 is modified to Phosphotyrosine. ATP is bound at residue R376. An N6-acetyllysine modification is found at K419. Position 429 is a phosphoserine (S429). K434 bears the N6-acetyllysine mark. S452 carries the phosphoserine modification. N6-acetyllysine is present on K465. Phosphotyrosine is present on Y468. K547 is modified (N6-acetyllysine). C560 bears the S-nitrosocysteine mark. Residues 590–693 form an interaction with NR1D1 region; that stretch reads MAAKKHLEVN…DDDTSRMEEV (104 aa). Position 603 is a phosphoserine (S603). The tract at residues 644-694 is required for homodimerization; it reads QTHANRIYRMIKLGLGIDEDDPTADDTAAAVTEEMPPLEGDDDTSRMEEVD. The tract at residues 662–694 is disordered; that stretch reads EDDPTADDTAAAVTEEMPPLEGDDDTSRMEEVD. Positions 668 to 677 are enriched in low complexity; it reads DDTAAAVTEE. A TPR repeat-binding motif is present at residues 685-694; it reads DDTSRMEEVD. Positions 690–694 are essential for interaction with SMYD3, TSC1 and STIP1/HOP; that stretch reads MEEVD. The interval 691 to 694 is essential for interaction with SGTA and TTC1; sequence EEVD.

This sequence belongs to the heat shock protein 90 family. In terms of assembly, homodimer. Identified in NR3C1/GCR steroid receptor-chaperone complexes formed at least by NR3C1, HSP90AA1 and a variety of proteins containing TPR repeats such as FKBP4, FKBP5, PPID, PPP5C or STIP1. Forms a complex containing HSP90AA1, TSC1 and TSC2; TSC1 is required to recruit TCS2 to the complex. The closed form interacts (via the middle domain and TPR repeat-binding motif) with co-chaperone TSC1 (via C-terminus). Interacts with TOM34. Interacts with TERT; the interaction, together with PTGES3, is required for correct assembly and stabilization of the TERT holoenzyme complex. Interacts with CHORDC1 and DNAJC7. Interacts with STUB1 and UBE2N; may couple the chaperone and ubiquitination systems. Interacts (via TPR repeat-binding motif) with PPP5C (via TPR repeats); the interaction is direct and activates PPP5C phosphatase activity. Following LPS binding, may form a complex with CXCR4, GDF5 and HSPA8. Interacts with KSR1. Interacts with co-chaperone CDC37 (via C-terminus); the interaction inhibits HSP90AA1 ATPase activity. May interact with NWD1. Interacts with FNIP1 and FNIP2; the interaction inhibits HSP90AA1 ATPase activity. Interacts with co-chaperone AHSA1 (phosphorylated on 'Tyr-223'); the interaction activates HSP90AA1 ATPase activity and results in the dissociation of TSC1 from HSP90AA1. Interacts with FLCN in the presence of FNIP1. Interacts with HSP70, STIP1 and PTGES3. Interacts with SMYD3; this interaction enhances SMYD3 histone-lysine N-methyltransferase. Interacts with SGTA (via TPR repeats). Interacts with TTC1 (via TPR repeats). Interacts with HSF1 in an ATP-dependent manner. Interacts with MET; the interaction suppresses MET kinase activity. Interacts with ERBB2 in an ATP-dependent manner; the interaction suppresses ERBB2 kinase activity. Interacts with HIF1A, KEAP1 and RHOBTB2. Interacts with HSF1; this interaction is decreased in a IER5-dependent manner, promoting HSF1 accumulation in the nucleus, homotrimerization and DNA-binding activities. Interacts with STUB1 and SMAD3. Interacts with HSP90AB1; interaction is constitutive. Interacts with HECTD1 (via N-terminus). Interacts with NR3C1 (via domain NR LBD) and NR1D1 (via domain NR LBD). Interacts with NLPR12. Interacts with PDCL3. Interacts with TOMM70; the interaction is required for preprotein mitochondrial import. Interacts with TOMM70, IRF3 and TBK1; the interactions are direct and mediate the association of TOMM70 with IRF3 and TBK1. Forms a complex with ASL, ASS1 and NOS2; the complex regulates cell-autonomous L-arginine synthesis and citrulline recycling while channeling extracellular L-arginine to nitric oxide synthesis pathway. ISGylated. Post-translationally, S-nitrosylated; negatively regulates the ATPase activity and the activation of eNOS by HSP90AA1. In terms of processing, ubiquitinated via 'Lys-63'-linked polyubiquitination by HECTD1. Ubiquitination promotes translocation into the cytoplasm away from the membrane and secretory pathways.

It is found in the nucleus. The protein resides in the cytoplasm. Its subcellular location is the melanosome. The protein localises to the cell membrane. It localises to the mitochondrion. The enzyme catalyses ATP + H2O = ADP + phosphate + H(+). In the resting state, through the dimerization of its C-terminal domain, HSP90 forms a homodimer which is defined as the open conformation. Upon ATP-binding, the N-terminal domain undergoes significant conformational changes and comes in contact to form an active closed conformation. After HSP90 finishes its chaperoning tasks of assisting the proper folding, stabilization and activation of client proteins under the active state, ATP molecule is hydrolyzed to ADP which then dissociates from HSP90 and directs the protein back to the resting state. Co-chaperone TSC1 promotes ATP binding and inhibits HSP90AA1 ATPase activity. Binding to phosphorylated AHSA1 promotes HSP90AA1 ATPase activity. Inhibited by geldanamycin, Ganetespib (STA-9090) and SNX-2112. Functionally, molecular chaperone that promotes the maturation, structural maintenance and proper regulation of specific target proteins involved for instance in cell cycle control and signal transduction. Undergoes a functional cycle that is linked to its ATPase activity which is essential for its chaperone activity. This cycle probably induces conformational changes in the client proteins, thereby causing their activation. Interacts dynamically with various co-chaperones that modulate its substrate recognition, ATPase cycle and chaperone function. Engages with a range of client protein classes via its interaction with various co-chaperone proteins or complexes, that act as adapters, simultaneously able to interact with the specific client and the central chaperone itself. Recruitment of ATP and co-chaperone followed by client protein forms a functional chaperone. After the completion of the chaperoning process, properly folded client protein and co-chaperone leave HSP90 in an ADP-bound partially open conformation and finally, ADP is released from HSP90 which acquires an open conformation for the next cycle. Plays a critical role in mitochondrial import, delivers preproteins to the mitochondrial import receptor TOMM70. Apart from its chaperone activity, it also plays a role in the regulation of the transcription machinery. HSP90 and its co-chaperones modulate transcription at least at three different levels. In the first place, they alter the steady-state levels of certain transcription factors in response to various physiological cues. Second, they modulate the activity of certain epigenetic modifiers, such as histone deacetylases or DNA methyl transferases, and thereby respond to the change in the environment. Third, they participate in the eviction of histones from the promoter region of certain genes and thereby turn on gene expression. Binds bacterial lipopolysaccharide (LPS) and mediates LPS-induced inflammatory response, including TNF secretion by monocytes. Antagonizes STUB1-mediated inhibition of TGF-beta signaling via inhibition of STUB1-mediated SMAD3 ubiquitination and degradation. Mediates the association of TOMM70 with IRF3 or TBK1 in mitochondrial outer membrane which promotes host antiviral response. The sequence is that of Heat shock protein HSP 90-alpha (HSP90AA1) from Oryctolagus cuniculus (Rabbit).